The chain runs to 179 residues: Large ribosomal subunit protein uL5 (179 aa).

Belongs to the universal ribosomal protein uL5 family. As to quaternary structure, part of the 50S ribosomal subunit; part of the 5S rRNA/L5/L18/L25 subcomplex. Contacts the 5S rRNA and the P site tRNA. Forms a bridge to the 30S subunit in the 70S ribosome.

Its function is as follows. This is one of the proteins that bind and probably mediate the attachment of the 5S RNA into the large ribosomal subunit, where it forms part of the central protuberance. In the 70S ribosome it contacts protein S13 of the 30S subunit (bridge B1b), connecting the 2 subunits; this bridge is implicated in subunit movement. Contacts the P site tRNA; the 5S rRNA and some of its associated proteins might help stabilize positioning of ribosome-bound tRNAs. This is Large ribosomal subunit protein uL5 from Exiguobacterium sp. (strain ATCC BAA-1283 / AT1b).